A 344-amino-acid polypeptide reads, in one-letter code: Nicotinate-nucleotide--dimethylbenzimidazole phosphoribosyltransferase (344 aa).

Glutamate 311 functions as the Proton acceptor in the catalytic mechanism.

Belongs to the CobT family.

The catalysed reaction is 5,6-dimethylbenzimidazole + nicotinate beta-D-ribonucleotide = alpha-ribazole 5'-phosphate + nicotinate + H(+). It functions in the pathway nucleoside biosynthesis; alpha-ribazole biosynthesis; alpha-ribazole from 5,6-dimethylbenzimidazole: step 1/2. Its function is as follows. Catalyzes the synthesis of alpha-ribazole-5'-phosphate from nicotinate mononucleotide (NAMN) and 5,6-dimethylbenzimidazole (DMB). This chain is Nicotinate-nucleotide--dimethylbenzimidazole phosphoribosyltransferase, found in Aromatoleum aromaticum (strain DSM 19018 / LMG 30748 / EbN1) (Azoarcus sp. (strain EbN1)).